We begin with the raw amino-acid sequence, 158 residues long: Pathogenesis-related protein 1 (158 aa).

Belongs to the BetVI family.

It localises to the cytoplasm. The protein is Pathogenesis-related protein 1 (PR1) of Asparagus officinalis (Garden asparagus).